The following is a 610-amino-acid chain: Phosphomethylpyrimidine synthase (610 aa).

Substrate contacts are provided by residues Asn216, Met245, Tyr274, His310, 330–332, 371–374, and Glu410; these read SRG and DGLR. His414 is a Zn(2+) binding site. Tyr437 contacts substrate. His478 is a binding site for Zn(2+). [4Fe-4S] cluster is bound by residues Cys558, Cys561, and Cys566.

Belongs to the ThiC family. Homodimer. Requires [4Fe-4S] cluster as cofactor.

The enzyme catalyses 5-amino-1-(5-phospho-beta-D-ribosyl)imidazole + S-adenosyl-L-methionine = 4-amino-2-methyl-5-(phosphooxymethyl)pyrimidine + CO + 5'-deoxyadenosine + formate + L-methionine + 3 H(+). The protein operates within cofactor biosynthesis; thiamine diphosphate biosynthesis. Catalyzes the synthesis of the hydroxymethylpyrimidine phosphate (HMP-P) moiety of thiamine from aminoimidazole ribotide (AIR) in a radical S-adenosyl-L-methionine (SAM)-dependent reaction. This chain is Phosphomethylpyrimidine synthase, found in Allorhizobium ampelinum (strain ATCC BAA-846 / DSM 112012 / S4) (Agrobacterium vitis (strain S4)).